Consider the following 154-residue polypeptide: Large ribosomal subunit protein uL13 (154 aa).

The interval P132–A154 is disordered.

It belongs to the universal ribosomal protein uL13 family. As to quaternary structure, part of the 50S ribosomal subunit.

This protein is one of the early assembly proteins of the 50S ribosomal subunit, although it is not seen to bind rRNA by itself. It is important during the early stages of 50S assembly. This Rhodopseudomonas palustris (strain HaA2) protein is Large ribosomal subunit protein uL13.